Reading from the N-terminus, the 93-residue chain is Small ribosomal subunit protein uS19 (93 aa).

It belongs to the universal ribosomal protein uS19 family.

Its function is as follows. Protein S19 forms a complex with S13 that binds strongly to the 16S ribosomal RNA. In Dehalococcoides mccartyi (strain ATCC BAA-2100 / JCM 16839 / KCTC 5957 / BAV1), this protein is Small ribosomal subunit protein uS19.